Reading from the N-terminus, the 388-residue chain is Glucose-6-phosphate/phosphate translocator 1, chloroplastic (388 aa).

Residues 1–65 (MVLSVKQTLS…LRAKSPVVRC (65 aa)) constitute a chloroplast transit peptide. The next 8 helical transmembrane spans lie at 95–115 (LKIGIYFATWWALNVVFNIYN), 129–149 (STLSLAAGSLMMLISWAVGIV), 158–178 (FWKTLFPVAVAHTIGHVAATV), 211–231 (FPTSVYLSLIPIIGGCALSAL), 233–253 (ELNFNMIGFMGAMISNLAFVF), 273–293 (YACLSMLSLLILTPFAIAVEG), 305–325 (LATVGPQFVWWVVAQSVFYHL), and 363–383 (TPVQPVNALGAAIAILGTFLY). Residues 112–229 (NIYNKKVLNA…IPIIGGCALS (118 aa)) enclose the EamA domain.

It belongs to the TPT transporter family. GPT (TC 2.A.7.9) subfamily. As to expression, expressed in seeds, flowers, rosette leaves, and roots, with highest levels found in stamens. Found in the root cap, in guard cells and in mesophyll cells.

The protein resides in the plastid. Its subcellular location is the chloroplast membrane. It is found in the endoplasmic reticulum membrane. It localises to the peroxisome membrane. Its function is as follows. Glucose 6-phosphate (Glc6P) transporter. Also transports inorganic phosphate, 3-phosphoglycerate, triose phosphates and, to a leser extent, phosphoenolpyruvate. Responsible for the transport of Glc6P into plastids of heterotrophic tissues where it can be used as a carbon source for starch biosynthesis, as substrate for fatty acid biosynthesis or as substrate for NADPH generation via the oxidative pentose phosphate pathway (OPPP). Required for pollen maturation and embryo sac development. Preferentially exchanges Glc6P for ribulose-5-phosphate (Ru5P) in reconstituted yeast proteoliposomes. May supply the substrate (Glc6P) for OPPP reactions inside peroxisomes and exchange it with the product Ru5P which leaves the organelle. The polypeptide is Glucose-6-phosphate/phosphate translocator 1, chloroplastic (Arabidopsis thaliana (Mouse-ear cress)).